We begin with the raw amino-acid sequence, 664 residues long: Probable urea active transporter 1 (664 aa).

A run of 16 helical transmembrane segments spans residues S9–V29, G56–A76, G86–I106, G132–G152, T165–I185, F189–A209, G252–G272, I290–V310, M327–G347, A353–V373, L395–T415, Y428–F448, I454–V474, A496–F516, V555–T575, and W587–L607.

The protein belongs to the sodium:solute symporter (SSF) (TC 2.A.21) family.

Its subcellular location is the membrane. Its function is as follows. Involved in active transport of urea. This is Probable urea active transporter 1 (dur3-1) from Schizosaccharomyces pombe (strain 972 / ATCC 24843) (Fission yeast).